A 207-amino-acid polypeptide reads, in one-letter code: MKLQGFVLLISGPSGAGKSTLLKKLFDEFEDELYFSISSTTRKPREGEKNGIHYHFISHEEFQKGIDSDHFLEWARVHENFYGTSLKHTQNALDNGKIVVFDIDVQGFKIARKKMADKIVSVFITTKNKDELKKRLIKRNTDTIIQLEKRLQNASDEMKELSEYDYLIINDELKQSYEALRAILIAHKFRTKGQNLGQIQNIWNEGE.

In terms of domain architecture, Guanylate kinase-like spans Gly5–Ile185. Residue Gly12–Ser19 coordinates ATP.

Belongs to the guanylate kinase family.

It is found in the cytoplasm. It carries out the reaction GMP + ATP = GDP + ADP. Its function is as follows. Essential for recycling GMP and indirectly, cGMP. This Campylobacter jejuni subsp. jejuni serotype O:2 (strain ATCC 700819 / NCTC 11168) protein is Guanylate kinase (gmk).